A 1902-amino-acid chain; its full sequence is PI-type proteinase (1902 aa).

Residues 1-33 (MQRKKKGLSILLAGTVALGALAVLPVGEIQAKA) form the signal peptide. A propeptide spanning residues 34–187 (AISQQTKGSS…VTLAKVYYPT (154 aa)) is cleaved from the precursor. The 507-residue stretch at 191 to 697 (ANSMANVQAV…AGLVDVKAAI (507 aa)) folds into the Peptidase S8 domain. Active-site charge relay system residues include D217, H281, and S620. The disordered stretch occupies residues 1796 to 1874 (GKGDGTTGTS…GALPKTGETT (79 aa)). Positions 1797-1812 (KGDGTTGTSDKGGGQG) are enriched in gly residues. Polar residues predominate over residues 1830–1843 (SQPSSGGNIPTNPA). The LPXTG sorting signal motif lies at 1867-1871 (LPKTG). Residue T1870 is modified to Pentaglycyl murein peptidoglycan amidated threonine. Residues 1871-1902 (GETTERPAFGFLGVIVVILMGVLGLKRKQREE) constitute a propeptide, removed by sortase.

It belongs to the peptidase S8 family.

Its subcellular location is the secreted. It localises to the cell wall. The enzyme catalyses Endopeptidase activity with very broad specificity, although some subsite preference have been noted, e.g. large hydrophobic residues in the P1 and P4 positions, and Pro in the P2 position. Best known for its action on caseins, although it has been shown to hydrolyze hemoglobin and oxidized insulin B-chain.. Protease which breaks down milk proteins during the growth of the bacteria on milk. This chain is PI-type proteinase (prtP), found in Lactococcus lactis subsp. cremoris (Streptococcus cremoris).